A 198-amino-acid chain; its full sequence is Recombination protein RecR (198 aa).

The segment at 57–72 adopts a C4-type zinc-finger fold; sequence CEKCNTFTEAQICEVC. Residues 80–175 enclose the Toprim domain; it reads TLLCVVETPA…SVTRLARGVP (96 aa).

This sequence belongs to the RecR family.

Functionally, may play a role in DNA repair. It seems to be involved in an RecBC-independent recombinational process of DNA repair. It may act with RecF and RecO. This chain is Recombination protein RecR, found in Paraburkholderia phymatum (strain DSM 17167 / CIP 108236 / LMG 21445 / STM815) (Burkholderia phymatum).